The following is a 129-amino-acid chain: Large ribosomal subunit protein bL17 (129 aa).

Belongs to the bacterial ribosomal protein bL17 family. As to quaternary structure, part of the 50S ribosomal subunit. Contacts protein L32.

This chain is Large ribosomal subunit protein bL17, found in Buchnera aphidicola subsp. Baizongia pistaciae (strain Bp).